The following is a 188-amino-acid chain: Cytochrome b-245 chaperone 1 homolog (188 aa).

A helical membrane pass occupies residues 20 to 42; the sequence is SIRSWSLLVGILSVGLAAAYYST.

Belongs to the CYBC1 family.

The protein resides in the endoplasmic reticulum membrane. Its function is as follows. Functions as a chaperone necessary for a stable expression of the CYBA and CYBB subunits of the cytochrome b-245 heterodimer. The protein is Cytochrome b-245 chaperone 1 homolog (cybc1) of Xenopus laevis (African clawed frog).